Consider the following 503-residue polypeptide: ATP synthase subunit alpha (503 aa).

170 to 177 (GDRQTGKT) contacts ATP.

Belongs to the ATPase alpha/beta chains family. In terms of assembly, F-type ATPases have 2 components, CF(1) - the catalytic core - and CF(0) - the membrane proton channel. CF(1) has five subunits: alpha(3), beta(3), gamma(1), delta(1), epsilon(1). CF(0) has three main subunits: a(1), b(2) and c(9-12). The alpha and beta chains form an alternating ring which encloses part of the gamma chain. CF(1) is attached to CF(0) by a central stalk formed by the gamma and epsilon chains, while a peripheral stalk is formed by the delta and b chains.

The protein localises to the cell membrane. It carries out the reaction ATP + H2O + 4 H(+)(in) = ADP + phosphate + 5 H(+)(out). Functionally, produces ATP from ADP in the presence of a proton gradient across the membrane. The alpha chain is a regulatory subunit. This chain is ATP synthase subunit alpha, found in Brevibacillus brevis (strain 47 / JCM 6285 / NBRC 100599).